A 491-amino-acid chain; its full sequence is Cytochrome P450 2C40 (491 aa).

Positions 1-25 (MDPFVVLVLCLSFLLVLSLWRQRSA) are cleaved as a signal peptide. Residue Cys435 coordinates heme.

This sequence belongs to the cytochrome P450 family. Heme serves as cofactor. As to expression, liver, brain, kidney, and intestine, with trace amounts in lung and heart. Expressed throughout the intestinal tract, with higher expression levels in jejunum, cecum and colon.

The protein resides in the endoplasmic reticulum membrane. It localises to the microsome membrane. The catalysed reaction is (5Z,8Z,11Z,14Z)-eicosatetraenoate + reduced [NADPH--hemoprotein reductase] + O2 = 16(R)-hydroxy-(5Z,8Z,11Z,14Z)-eicosatetraenoate + oxidized [NADPH--hemoprotein reductase] + H2O + H(+). The enzyme catalyses (5Z,8Z,11Z,14Z)-eicosatetraenoate + reduced [NADPH--hemoprotein reductase] + O2 = 16(S)-hydroxy-(5Z,8Z,11Z,14Z)-eicosatetraenoate + oxidized [NADPH--hemoprotein reductase] + H2O + H(+). It carries out the reaction (5Z,8Z,11Z,14Z)-eicosatetraenoate + reduced [NADPH--hemoprotein reductase] + O2 = (14R,15S)-epoxy-(5Z,8Z,11Z)-eicosatrienoate + oxidized [NADPH--hemoprotein reductase] + H2O + H(+). It catalyses the reaction (5Z,8Z,11Z,14Z)-eicosatetraenoate + reduced [NADPH--hemoprotein reductase] + O2 = (14S,15R)-epoxy-(5Z,8Z,11Z)-eicosatrienoate + oxidized [NADPH--hemoprotein reductase] + H2O + H(+). It functions in the pathway lipid metabolism; arachidonate metabolism. Its function is as follows. A cytochrome P450 monooxygenase that may play a major role in the metabolism of arachidonic acid in the intestinal tract. Exhibits regioselective hydroxylase and epoxidase activity toward arachidonic acid, producing 16(R)-hydroxyeicosatetraenoic acid (HETE) and (14R,15S)-epoxyeicosatrienoic acid (EpETrE) as major products. Mechanistically, uses molecular oxygen inserting one oxygen atom into a substrate, and reducing the second into a water molecule, with two electrons provided by NADPH via cytochrome P450 reductase (CPR; NADPH-ferrihemoprotein reductase). The polypeptide is Cytochrome P450 2C40 (Mus musculus (Mouse)).